The sequence spans 233 residues: MVRGRTELKRIENPTSRQVTFSKRRNGLLKKAFELSVLCDAEVALIVFSPRGRLYEFASAPSLQKTIDRYKAYTKDHVNNKTIQQDIQQVKDDTLGLAKKLEALDESRRKILGENLEGFSIEELRGLEMKLEKSLHKIRLKKTELLEQQIAKLKEKERTLLKDNENLRGKHRNLEAAALVANHMTTTTAPAAWPRDVPMTSSTAGAADAMDVETDLYIGLPGTERSSNRSETG.

The MADS-box domain occupies 1–61; sequence MVRGRTELKR…GRLYEFASAP (61 aa). The 91-residue stretch at 87-177 folds into the K-box domain; sequence IQQVKDDTLG…RGKHRNLEAA (91 aa).

Its subcellular location is the nucleus. Probable transcription factor. The chain is MADS-box transcription factor 56 (MADS56) from Oryza sativa subsp. japonica (Rice).